The sequence spans 397 residues: uncharacterized protein (397 aa).

Helical transmembrane passes span 2–24 (LNLL…PGIH), 44–66 (YIPF…SAFL), 92–114 (AIVL…SLFL), 124–143 (AFYC…FILY), 150–169 (SVWE…AVLY), 173–195 (AFNI…INNL), 255–277 (FIVS…VIFI), 297–319 (INTA…LNLS), 331–350 (FKFL…IIGS), and 354–373 (YLIY…LLAV).

It localises to the cell membrane. This is an uncharacterized protein from Methanocaldococcus jannaschii (strain ATCC 43067 / DSM 2661 / JAL-1 / JCM 10045 / NBRC 100440) (Methanococcus jannaschii).